Here is a 179-residue protein sequence, read N- to C-terminus: Adenine phosphoribosyltransferase (179 aa).

It belongs to the purine/pyrimidine phosphoribosyltransferase family. Homodimer.

It is found in the cytoplasm. The catalysed reaction is AMP + diphosphate = 5-phospho-alpha-D-ribose 1-diphosphate + adenine. It participates in purine metabolism; AMP biosynthesis via salvage pathway; AMP from adenine: step 1/1. Its function is as follows. Catalyzes a salvage reaction resulting in the formation of AMP, that is energically less costly than de novo synthesis. In Gluconobacter oxydans (strain 621H) (Gluconobacter suboxydans), this protein is Adenine phosphoribosyltransferase.